A 192-amino-acid polypeptide reads, in one-letter code: E3 ubiquitin-protein ligase RNF183 (192 aa).

Over 1–161 (MAEQQGRELE…RECFRNPQFR (161 aa)) the chain is Cytoplasmic. Residues 13 to 60 (CPVCWNPFNNTFHTPKMLDCCHSFCVECLAHLSLVTPARRRLLCPLCR) form an RING-type zinc finger. Residues 162–182 (IFAYLMAVILSVTLLLIFSIF) form a helical; Anchor for type IV membrane protein membrane-spanning segment. The Lumenal segment spans residues 183–192 (WTKQFLWGVG).

In terms of assembly, interacts with FATE1. Interacts with SEC16A. Interacts with BCL2L1. In terms of processing, autoubiquitinated (in vitro). As to expression, kidney and testis.

The protein resides in the endoplasmic reticulum membrane. It is found in the endoplasmic reticulum. It localises to the golgi apparatus. Its subcellular location is the cis-Golgi network membrane. The protein localises to the lysosome membrane. The enzyme catalyses S-ubiquitinyl-[E2 ubiquitin-conjugating enzyme]-L-cysteine + [acceptor protein]-L-lysine = [E2 ubiquitin-conjugating enzyme]-L-cysteine + N(6)-ubiquitinyl-[acceptor protein]-L-lysine.. It functions in the pathway protein modification; protein ubiquitination. Acts as an E3 ubiquitin ligase catalyzing the covalent attachment of ubiquitin moieties onto substrate proteins. Triggers apoptosis in response to prolonged ER stress by mediating the polyubiquitination and subsequent proteasomal degradation of BCL2L1. May collaborate with FATE1 to restrain BIK protein levels thus regulating apoptotic signaling. This is E3 ubiquitin-protein ligase RNF183 (RNF183) from Homo sapiens (Human).